We begin with the raw amino-acid sequence, 429 residues long: MGEKGHLSRVLLECSLSDKLCVVREKQYEVIIVPALLVGGFLILLAIILWLFIRGQRSQRQSPGPRGTASVPASRGRSQEAAGHGEKVLLPLKETSVEGFLRAATPRLAKLQVPREQLLEVLEQIHSGSCGTLYHATMTTKDHPKPKSVVLKALEDPVGLQEVQDFIGRIQFYQYLGKHKNLVQLEGCCTERLPLYMMLEDVVPGDLLSFLWTCRRDVMTMDGLLYDLTEKQIYHIGKQILLALEFLQEKHLFHGDVAARNILIQSDLTPKLCHLGLAYEVHAHGAISSARSSTIPLKWLAPERLLLRPASIRGDIWSFGILLYEMVTLGAPPYPEVPPTSILQYLQRKKIMKRPSSCSHAMYNIMKCCWRWSEDSRPLLGQLLQRLEAASRSADDKAVLQVPELVVPELYADVAGIRAESISYSFSVL.

The chain crosses the membrane as a helical span at residues valine 30–tryptophan 50. The tract at residues serine 58–glycine 83 is disordered. One can recognise a Protein kinase domain in the interval leucine 119–alanine 390. Residues isoleucine 125–leucine 133 and lysine 152 each bind ATP. Aspartate 256 (proton acceptor) is an active-site residue.

It belongs to the protein kinase superfamily. Tyr protein kinase family. As to expression, highly expressed in colon and small intestine. Weakly or not expressed in spleen, skeletal muscle, liver, kidney, heart and brain. Expressed in transformed kidney cell lines (COS-1 and HEK293T).

It is found in the membrane. The catalysed reaction is L-tyrosyl-[protein] + ATP = O-phospho-L-tyrosyl-[protein] + ADP + H(+). Probable tyrosine protein-kinase, which has strong transforming capabilities on a variety of cell lines including NIH 3T3 fibroblasts and on athymic nude mice. When overexpressed, it can also induce tumor cell invasion as well as metastasis in distant organs. May act by activating both MAP kinase and phosphatidylinositol 3'-kinases (PI3K) pathways. The polypeptide is Tyrosine-protein kinase STYK1 (Styk1) (Mus musculus (Mouse)).